Here is a 362-residue protein sequence, read N- to C-terminus: GDSL esterase/lipase 6 (362 aa).

A signal peptide spans 1-23; it reads MSSSSSMDLLMCLLLLISPVVLA. The active-site Nucleophile is Ser38. 5 N-linked (GlcNAc...) asparagine glycosylation sites follow: Asn50, Asn103, Asn107, Asn195, and Asn296. Catalysis depends on residues Asp323 and His326.

It belongs to the 'GDSL' lipolytic enzyme family.

The protein localises to the secreted. This chain is GDSL esterase/lipase 6 (GLIP6), found in Arabidopsis thaliana (Mouse-ear cress).